The following is a 580-amino-acid chain: Isocitrate lyase (580 aa).

Residue 106 to 108 coordinates substrate; it reads SGW. Aspartate 177 serves as a coordination point for Mg(2+). Cysteine 215 acts as the Proton acceptor in catalysis. Substrate contacts are provided by residues 216–217, arginine 252, 441–445, and threonine 476; these read GH and NLSPS. The short motif at 578–580 is the Microbody targeting signal element; it reads SRM.

Belongs to the isocitrate lyase/PEP mutase superfamily. Isocitrate lyase family. Homotetramer. Mg(2+) is required as a cofactor.

The protein resides in the glyoxysome. The catalysed reaction is D-threo-isocitrate = glyoxylate + succinate. It participates in carbohydrate metabolism; glyoxylate cycle; (S)-malate from isocitrate: step 1/2. In terms of biological role, involved in storage lipid mobilization during the growth of higher plant seedling. The sequence is that of Isocitrate lyase (ICL 8) from Pinus taeda (Loblolly pine).